The chain runs to 414 residues: Gamma-glutamyl phosphate reductase (414 aa).

This sequence belongs to the gamma-glutamyl phosphate reductase family.

Its subcellular location is the cytoplasm. The catalysed reaction is L-glutamate 5-semialdehyde + phosphate + NADP(+) = L-glutamyl 5-phosphate + NADPH + H(+). It participates in amino-acid biosynthesis; L-proline biosynthesis; L-glutamate 5-semialdehyde from L-glutamate: step 2/2. Catalyzes the NADPH-dependent reduction of L-glutamate 5-phosphate into L-glutamate 5-semialdehyde and phosphate. The product spontaneously undergoes cyclization to form 1-pyrroline-5-carboxylate. This chain is Gamma-glutamyl phosphate reductase, found in Alkaliphilus metalliredigens (strain QYMF).